Consider the following 142-residue polypeptide: Glia maturation factor beta (142 aa).

At Ser-2 the chain carries N-acetylserine. Residues 4 to 139 (SLVVCDVAED…TEEWLREKLG (136 aa)) form the ADF-H domain.

The protein belongs to the actin-binding proteins ADF family. GMF subfamily. In terms of processing, phosphorylated; stimulated by phorbol ester.

Functionally, this protein causes differentiation of brain cells, stimulation of neural regeneration, and inhibition of proliferation of tumor cells. This Mus musculus (Mouse) protein is Glia maturation factor beta (Gmfb).